We begin with the raw amino-acid sequence, 314 residues long: Acetyl-coenzyme A carboxylase carboxyl transferase subunit beta (314 aa).

Residues 25-294 (VWTKCDSCSQ…PGTKPIVAEF (270 aa)) enclose the CoA carboxyltransferase N-terminal domain. Residues Cys-29, Cys-32, Cys-48, and Cys-51 each coordinate Zn(2+). The C4-type zinc finger occupies 29–51 (CDSCSQVLYRAELERNLEVCPKC).

It belongs to the AccD/PCCB family. As to quaternary structure, acetyl-CoA carboxylase is a heterohexamer composed of biotin carboxyl carrier protein (AccB), biotin carboxylase (AccC) and two subunits each of ACCase subunit alpha (AccA) and ACCase subunit beta (AccD). Requires Zn(2+) as cofactor.

It is found in the cytoplasm. The catalysed reaction is N(6)-carboxybiotinyl-L-lysyl-[protein] + acetyl-CoA = N(6)-biotinyl-L-lysyl-[protein] + malonyl-CoA. It participates in lipid metabolism; malonyl-CoA biosynthesis; malonyl-CoA from acetyl-CoA: step 1/1. Component of the acetyl coenzyme A carboxylase (ACC) complex. Biotin carboxylase (BC) catalyzes the carboxylation of biotin on its carrier protein (BCCP) and then the CO(2) group is transferred by the transcarboxylase to acetyl-CoA to form malonyl-CoA. The sequence is that of Acetyl-coenzyme A carboxylase carboxyl transferase subunit beta from Photorhabdus laumondii subsp. laumondii (strain DSM 15139 / CIP 105565 / TT01) (Photorhabdus luminescens subsp. laumondii).